A 326-amino-acid chain; its full sequence is DnaJ homolog subfamily B member 6 (326 aa).

The 67-residue stretch at 3-69 (DYYEVLGVQK…KKRDIYDRFG (67 aa)) folds into the J domain. Residues 249-326 (ALPFQPTNTR…KKKKSTKGSY (78 aa)) are disordered. Ser-277 is modified (phosphoserine).

In terms of assembly, homooligomer.

The protein resides in the cytoplasm. It is found in the perinuclear region. It localises to the nucleus. Has a stimulatory effect on the ATPase activity of HSP70 in a dose-dependent and time-dependent manner and hence acts as a co-chaperone of HSP70. Plays an indispensable role in the organization of KRT8/KRT18 filaments. Acts as an endogenous molecular chaperone for neuronal proteins including huntingtin. Suppresses aggregation and toxicity of polyglutamine-containing, aggregation-prone proteins. Also reduces cellular toxicity and caspase-3 activity. This is DnaJ homolog subfamily B member 6 from Gallus gallus (Chicken).